We begin with the raw amino-acid sequence, 544 residues long: Probable protein kinase UbiB (544 aa).

One can recognise a Protein kinase domain in the interval 123–501 (EFDIKPLASA…KRQQATGKFL (379 aa)). ATP contacts are provided by residues 129 to 137 (LASASIAQV) and Lys-152. The active-site Proton acceptor is the Asp-287. Transmembrane regions (helical) follow at residues 496-516 (ATGK…AILV) and 519-539 (AYEQ…LLSW).

It belongs to the ABC1 family. UbiB subfamily.

It is found in the cell inner membrane. It functions in the pathway cofactor biosynthesis; ubiquinone biosynthesis [regulation]. Is probably a protein kinase regulator of UbiI activity which is involved in aerobic coenzyme Q (ubiquinone) biosynthesis. The chain is Probable protein kinase UbiB from Vibrio campbellii (strain ATCC BAA-1116).